We begin with the raw amino-acid sequence, 82 residues long: Putative membrane protein insertion efficiency factor (82 aa).

The protein belongs to the UPF0161 family.

It is found in the cell inner membrane. In terms of biological role, could be involved in insertion of integral membrane proteins into the membrane. This Synechococcus elongatus (strain ATCC 33912 / PCC 7942 / FACHB-805) (Anacystis nidulans R2) protein is Putative membrane protein insertion efficiency factor.